A 232-amino-acid chain; its full sequence is uncharacterized protein (232 aa).

The signal sequence occupies residues 1–18 (MGILKSLFTLGKSFISQA). Residues 207–232 (AEAGIGGSNKSSAQDVLARLQRQQGE) are disordered.

This sequence belongs to the PspA/Vipp/IM30 family.

This is an uncharacterized protein from Escherichia coli O6:H1 (strain CFT073 / ATCC 700928 / UPEC).